A 396-amino-acid chain; its full sequence is Elongation factor Tu 1 (396 aa).

The tr-type G domain maps to 10–206 (KPHVNVGTIG…TLDTYIPEPE (197 aa)). The tract at residues 19–26 (GHVDHGKT) is G1. 19–26 (GHVDHGKT) serves as a coordination point for GTP. T26 is a Mg(2+) binding site. The tract at residues 60–64 (GITIN) is G2. Residues 81-84 (DCPG) are G3. GTP contacts are provided by residues 81–85 (DCPGH) and 136–139 (NKCD). Positions 136-139 (NKCD) are G4. Positions 174–176 (SAL) are G5.

It belongs to the TRAFAC class translation factor GTPase superfamily. Classic translation factor GTPase family. EF-Tu/EF-1A subfamily. In terms of assembly, monomer.

It localises to the cytoplasm. It catalyses the reaction GTP + H2O = GDP + phosphate + H(+). In terms of biological role, GTP hydrolase that promotes the GTP-dependent binding of aminoacyl-tRNA to the A-site of ribosomes during protein biosynthesis. This is Elongation factor Tu 1 from Psychrobacter sp. (strain PRwf-1).